The sequence spans 221 residues: Pleckstrin homology domain-containing family B member 2 (221 aa).

The 108-residue stretch at 2–109 folds into the PH domain; sequence AFVKSGWLLR…WKFTLQDSRT (108 aa). Lys20 contributes to the a 1,2-diacyl-sn-glycero-3-phospho-L-serine binding site.

As to expression, highly expressed in brain, retina, heart and kidney. Detected at lower levels in lung, muscle and nerve.

The protein localises to the recycling endosome membrane. Its function is as follows. Involved in retrograde transport of recycling endosomes. The chain is Pleckstrin homology domain-containing family B member 2 (Plekhb2) from Mus musculus (Mouse).